The following is a 114-amino-acid chain: UPF0342 protein LVIS_1488 (114 aa).

This sequence belongs to the UPF0342 family.

The chain is UPF0342 protein LVIS_1488 from Levilactobacillus brevis (strain ATCC 367 / BCRC 12310 / CIP 105137 / JCM 1170 / LMG 11437 / NCIMB 947 / NCTC 947) (Lactobacillus brevis).